We begin with the raw amino-acid sequence, 490 residues long: Glutamate--tRNA ligase (490 aa).

The short motif at 13 to 23 (PSPTGTPHVGL) is the 'HIGH' region element. The 'KMSKS' region motif lies at 257–261 (KLSKR). An ATP-binding site is contributed by Lys-260.

This sequence belongs to the class-I aminoacyl-tRNA synthetase family. Glutamate--tRNA ligase type 1 subfamily. In terms of assembly, monomer.

It is found in the cytoplasm. It catalyses the reaction tRNA(Glu) + L-glutamate + ATP = L-glutamyl-tRNA(Glu) + AMP + diphosphate. Its function is as follows. Catalyzes the attachment of glutamate to tRNA(Glu) in a two-step reaction: glutamate is first activated by ATP to form Glu-AMP and then transferred to the acceptor end of tRNA(Glu). The chain is Glutamate--tRNA ligase from Mycobacterium bovis (strain BCG / Pasteur 1173P2).